Here is a 105-residue protein sequence, read N- to C-terminus: Large ribosomal subunit protein eL42 (105 aa).

The segment at 23 to 52 (KVTQYKKGKESRLAQGRRRYDSKQKGFGGQ) is disordered. Positions 29–46 (KGKESRLAQGRRRYDSKQ) are enriched in basic and acidic residues.

This sequence belongs to the eukaryotic ribosomal protein eL42 family.

In Brugia malayi (Filarial nematode worm), this protein is Large ribosomal subunit protein eL42 (rpl-44).